Reading from the N-terminus, the 1548-residue chain is Lysine-specific demethylase 5D (1548 aa).

Positions 14–55 constitute a JmjN domain; that stretch reads CPVFEPSWAEFRDPLGYIAKIRPIAEKSGICKIRPPADWQPP. In terms of domain architecture, ARID spans 79–169; it reads TRVKLNYLDQ…IIYPYEIFQS (91 aa). Glycyl lysine isopeptide (Lys-Gly) (interchain with G-Cter in SUMO2) cross-links involve residues Lys205, Lys229, Lys244, and Lys279. The interval 208-229 is disordered; sequence CYSRRGKRLQPEPEPTEEDIEK. A phosphoserine mark is found at Ser300 and Ser316. The segment at 325–371 adopts a PHD-type 1 zinc-finger fold; the sequence is VCRICSRGDEVDKFLLCDGCSDNYHIFCLLPPLSEVPKGVWRCPKCI. Residue Tyr439 participates in 2-oxoglutarate binding. Positions 467-633 constitute a JmjC domain; it reads EYAACGWNLN…VGRQCIEHYR (167 aa). Positions 513 and 515 each coordinate Fe cation. Residues Ser521, Asn523, and Lys531 each coordinate 2-oxoglutarate. His601 contacts Fe cation. The segment at 706 to 758 adopts a C5HC2 zinc-finger fold; it reads CIKCKTTCFLSALACYDCPDSLVCLSHINDLCKCSRNRQYLRYRYTLDELPAM. Residues Ser889 and Ser893 each carry the phosphoserine modification. A Glycyl lysine isopeptide (Lys-Gly) (interchain with G-Cter in SUMO2) cross-link involves residue Lys1123. The PHD-type 2 zinc-finger motif lies at 1182 to 1243; it reads ICICGQVCAG…DTKFLCPLCM (62 aa). Ser1355 is modified (phosphoserine). The interval 1438-1468 is disordered; the sequence is KPENPGNWSEEQTPERRRQRRQKVVLSRKGE.

Belongs to the JARID1 histone demethylase family. As to quaternary structure, interacts withPCGF6, MSH5, ZMYND8, AR. L-ascorbate serves as cofactor. Requires Fe(2+) as cofactor.

The protein resides in the nucleus. The enzyme catalyses N(6),N(6),N(6)-trimethyl-L-lysyl(4)-[histone H3] + 3 2-oxoglutarate + 3 O2 = L-lysyl(4)-[histone H3] + 3 formaldehyde + 3 succinate + 3 CO2. Histone demethylase that specifically demethylates 'Lys-4' of histone H3, thereby playing a central role in histone code. Does not demethylate histone H3 'Lys-9', H3 'Lys-27', H3 'Lys-36', H3 'Lys-79' or H4 'Lys-20'. Demethylates trimethylated and dimethylated but not monomethylated H3 'Lys-4'. May play a role in spermatogenesis. Involved in transcriptional repression of diverse metastasis-associated genes; in this function seems to cooperate with ZMYND8. Suppresses prostate cancer cell invasion. Regulates androgen receptor (AR) transcriptional activity by demethylating H3K4me3 active transcription marks. This is Lysine-specific demethylase 5D (Kdm5d) from Mus musculus (Mouse).